Consider the following 240-residue polypeptide: Protein GrpE (240 aa).

Disordered regions lie at residues 1-54 (MSGD…NEAR) and 206-240 (VSMG…DGNG). The span at 215-233 (GASSQPAEAPAADAPAEDS) shows a compositional bias: low complexity.

The protein belongs to the GrpE family. As to quaternary structure, homodimer.

It is found in the cytoplasm. Functionally, participates actively in the response to hyperosmotic and heat shock by preventing the aggregation of stress-denatured proteins, in association with DnaK and GrpE. It is the nucleotide exchange factor for DnaK and may function as a thermosensor. Unfolded proteins bind initially to DnaJ; upon interaction with the DnaJ-bound protein, DnaK hydrolyzes its bound ATP, resulting in the formation of a stable complex. GrpE releases ADP from DnaK; ATP binding to DnaK triggers the release of the substrate protein, thus completing the reaction cycle. Several rounds of ATP-dependent interactions between DnaJ, DnaK and GrpE are required for fully efficient folding. This is Protein GrpE from Synechococcus sp. (strain WH7803).